The chain runs to 576 residues: Glucose-6-phosphate 1-dehydrogenase 1, chloroplastic (576 aa).

The N-terminal 50 residues, 1–50 (MATHSMIIPSPSSSSSSLATAASPFKETLPLFSRSLTFPRKSLFSQVRLR), are a transit peptide targeting the chloroplast. Residues 97-104 (GASGDLAK) and R131 each bind NADP(+). C149 and C157 are joined by a disulfide. Position 234 (K234) interacts with NADP(+). Residues K234, 264–268 (HYLGK), E302, and D321 each bind D-glucose 6-phosphate. H326 functions as the Proton acceptor in the catalytic mechanism. K419 contacts NADP(+). 2 residues coordinate D-glucose 6-phosphate: K422 and R427. NADP(+) is bound by residues R432 and R461. A D-glucose 6-phosphate-binding site is contributed by Q463. NADP(+) is bound by residues 469–471 (YLR) and R554.

This sequence belongs to the glucose-6-phosphate dehydrogenase family. Forms homodimer. Interacts with G6PD2, G6PD3 and G6PD4. As to expression, expressed in leaves, stems, buds, flowers and siliques.

Its subcellular location is the plastid. It localises to the chloroplast stroma. The protein resides in the peroxisome. The enzyme catalyses D-glucose 6-phosphate + NADP(+) = 6-phospho-D-glucono-1,5-lactone + NADPH + H(+). It functions in the pathway carbohydrate degradation; pentose phosphate pathway; D-ribulose 5-phosphate from D-glucose 6-phosphate (oxidative stage): step 1/3. With respect to regulation, regulated by metabolites. Post-translationally inactivated by cysteine-mediated redox modification via the ferredoxin-thioredoxin system in the light and this avoids futile cycles with photosynthetic CO2 fixation. Catalyzes the rate-limiting step of the oxidative pentose-phosphate pathway, which represents a route for the dissimilation of carbohydrates besides glycolysis. The main function of this enzyme is to provide reducing power (NADPH) and pentose phosphates for fatty acid and nucleic acid synthesis which are involved in membrane synthesis and cell division. This chain is Glucose-6-phosphate 1-dehydrogenase 1, chloroplastic, found in Arabidopsis thaliana (Mouse-ear cress).